The sequence spans 1220 residues: DNA-directed RNA polymerase subunit beta' (1220 aa).

Positions 61, 63, 76, and 79 each coordinate Zn(2+). Residues Asp450, Asp452, and Asp454 each contribute to the Mg(2+) site. The tract at residues 1197–1220 (QPEVEQEPTPDIPKLDDVAKSFEE) is disordered. The span at 1209 to 1220 (PKLDDVAKSFEE) shows a compositional bias: basic and acidic residues.

Belongs to the RNA polymerase beta' chain family. In terms of assembly, the RNAP catalytic core consists of 2 alpha, 1 beta, 1 beta' and 1 omega subunit. When a sigma factor is associated with the core the holoenzyme is formed, which can initiate transcription. Mg(2+) serves as cofactor. Zn(2+) is required as a cofactor.

The catalysed reaction is RNA(n) + a ribonucleoside 5'-triphosphate = RNA(n+1) + diphosphate. Functionally, DNA-dependent RNA polymerase catalyzes the transcription of DNA into RNA using the four ribonucleoside triphosphates as substrates. This is DNA-directed RNA polymerase subunit beta' from Leuconostoc citreum (strain KM20).